We begin with the raw amino-acid sequence, 219 residues long: Protoglabretal synthase ISM2 (219 aa).

Helical transmembrane passes span 26–46 (VHAW…VLAG), 59–79 (LMIW…YWLF), 112–132 (AVVG…LFAV), 144–164 (ILQL…FITA), and 178–198 (YYKY…LIII). Positions 55 to 197 (TDKWLMIWWA…TWLLFPALII (143 aa)) constitute an EXPERA domain.

The protein belongs to the EBP family.

The protein localises to the membrane. The enzyme catalyses 7,8-epoxymelianol = protoglabretal. It functions in the pathway secondary metabolite biosynthesis; terpenoid biosynthesis. Isomerase involved in the biosynthesis of glabretanes triterpene natural products such as glabretal, a component with in vitro antiproliferative properties on lymphocytes. Catalyzes the conversion of 7,8-epoxymelianol to protoglabretal via skeletal rearrangements. This is Protoglabretal synthase ISM2 from Ailanthus altissima (Tree-of-heaven).